The following is a 393-amino-acid chain: Branched-chain-amino-acid aminotransferase, mitochondrial (393 aa).

Residues 1–27 (MAAATLGQVWARKLLPVPWLLCGSKRC) constitute a mitochondrion transit peptide. Residue Tyr169 coordinates substrate. An N6-(pyridoxal phosphate)lysine modification is found at Lys230. At Lys322 the chain carries N6-acetyllysine.

It belongs to the class-IV pyridoxal-phosphate-dependent aminotransferase family. Homodimer. Pyridoxal 5'-phosphate serves as cofactor.

The protein localises to the mitochondrion. The enzyme catalyses L-leucine + 2-oxoglutarate = 4-methyl-2-oxopentanoate + L-glutamate. The catalysed reaction is L-isoleucine + 2-oxoglutarate = (S)-3-methyl-2-oxopentanoate + L-glutamate. It catalyses the reaction L-valine + 2-oxoglutarate = 3-methyl-2-oxobutanoate + L-glutamate. Catalyzes the first reaction in the catabolism of the essential branched chain amino acids leucine, isoleucine, and valine. May also function as a transporter of branched chain alpha-keto acids. In Mus musculus (Mouse), this protein is Branched-chain-amino-acid aminotransferase, mitochondrial (Bcat2).